The following is a 434-amino-acid chain: MDAKASNKTATLTVGNKNYDLPIHSGSVGPDVIDIGKLYGQSGLFTYDPGFTSTASCQSKITYIDGDAGVLEYRGYPIEQLAENGDFLETCYLLLYGNLPTAAQKKDFDDRVIHHTMVHEQMARFFQGFRRDAHPMAVMVASVGALAAFYHDSTDINDPKQRMIASMRMIAKIPTLAAMAYKYTIGQPFVYPKNSLKFAENFLHMCFAVPCEEYKINPVLADALDKIFILHADHEQNASTSTVRIAGSSGANPFACIAAGIACLWGPAHGGANEAALAMLAEIGSVDKIPEFIAKVKDKNSEVRLMGFGHRVYKNYDPRAKIMQKMCHAVLKETGHGDDPMLKVAMELEKIALSDQYFIDRKLYPNVDFYSGITLKAMGFPVSMFTVLFAVARTVGWISQWSEMIEDPQQKIGRPRQLYTGVTRRDYVAIKDRK.

Residues histidine 310 and aspartate 368 contribute to the active site.

It belongs to the citrate synthase family.

It catalyses the reaction oxaloacetate + acetyl-CoA + H2O = citrate + CoA + H(+). Its pathway is carbohydrate metabolism; tricarboxylic acid cycle; isocitrate from oxaloacetate: step 1/2. This Bradyrhizobium diazoefficiens (strain JCM 10833 / BCRC 13528 / IAM 13628 / NBRC 14792 / USDA 110) protein is Citrate synthase (gltA).